The sequence spans 113 residues: Small ribosomal subunit protein bS6 (113 aa).

The protein belongs to the bacterial ribosomal protein bS6 family.

In terms of biological role, binds together with bS18 to 16S ribosomal RNA. The polypeptide is Small ribosomal subunit protein bS6 (Pseudoalteromonas translucida (strain TAC 125)).